The primary structure comprises 137 residues: 2-iminobutanoate/2-iminopropanoate deaminase (137 aa).

S2 bears the N-acetylserine mark. An N6-succinyllysine mark is found at K13, K60, and K67. At T74 the chain carries Phosphothreonine.

The protein belongs to the RutC family. As to quaternary structure, homotrimer. Interacts with YTHDF2. As to expression, liver and kidney.

Its subcellular location is the cytoplasm. It localises to the nucleus. The protein localises to the peroxisome. It is found in the mitochondrion. The catalysed reaction is 2-iminobutanoate + H2O = 2-oxobutanoate + NH4(+). It catalyses the reaction 2-iminopropanoate + H2O = pyruvate + NH4(+). Functionally, catalyzes the hydrolytic deamination of enamine/imine intermediates that form during the course of normal metabolism. May facilitate the release of ammonia from these potentially toxic reactive metabolites, reducing their impact on cellular components. It may act on enamine/imine intermediates formed by several types of pyridoxal-5'-phosphate-dependent dehydratases including L-threonine dehydratase. In terms of biological role, also promotes endoribonucleolytic cleavage of some transcripts by promoting recruitment of the ribonuclease P/MRP complex. Acts by bridging YTHDF2 and the ribonuclease P/MRP complex. RIDA/HRSP12 binds to N6-methyladenosine (m6A)-containing mRNAs containing a 5'-GGUUC-3' motif: cooperative binding of RIDA/HRSP12 and YTHDF2 to such transcripts lead to recruitment of the ribonuclease P/MRP complex and subsequent endoribonucleolytic cleavage. In Rattus norvegicus (Rat), this protein is 2-iminobutanoate/2-iminopropanoate deaminase.